Consider the following 135-residue polypeptide: Thyrostimulin beta-5 subunit (135 aa).

The N-terminal stretch at 1–19 (MVMPLVLSLALTPPPLCHA) is a signal peptide. 5 disulfides stabilise this stretch: cysteine 30/cysteine 87, cysteine 54/cysteine 102, cysteine 63/cysteine 118, cysteine 67/cysteine 120, and cysteine 123/cysteine 130.

It belongs to the glycoprotein hormones subunit beta family. As to quaternary structure, heterodimer with GPHA2; non-covalently-linked. In terms of tissue distribution, expressed by the venom duct.

It is found in the secreted. This Conus victoriae (Queen Victoria cone) protein is Thyrostimulin beta-5 subunit.